The chain runs to 1383 residues: NPC intracellular cholesterol transporter 1 homolog 1 (1383 aa).

The first 20 residues, 1–20 (MKQLLIFCLLFGSIFHHGDA), serve as a signal peptide directing secretion. 8 cysteine pairs are disulfide-bonded: Cys22–Cys76, Cys28–Cys39, Cys65–Cys111, Cys77–Cys115, Cys99–Cys246, Cys102–Cys167, Cys182–Cys187, and Cys235–Cys251. An N-linked (GlcNAc...) asparagine glycan is attached at Asn42. Residue Asn231 is glycosylated (N-linked (GlcNAc...) asparagine). A run of 2 helical transmembrane segments spans residues 282–302 (IFVM…GFVF) and 353–373 (PKSH…GMIY). Asn447 carries N-linked (GlcNAc...) asparagine glycosylation. Cystine bridges form between Cys464/Cys474 and Cys526/Cys541. Asn558 carries an N-linked (GlcNAc...) asparagine glycan. 6 consecutive transmembrane segments (helical) span residues 627–647 (EIVT…FSLG), 665–685 (ICLG…SWGI), 697–717 (ALVV…FMVV), 746–766 (TMPA…IGGF), 780–800 (GLAV…LFVW), and 856–876 (IITG…SSKI). One can recognise an SSD domain in the interval 627–800 (EIVTVVIALA…CTIFLALFVW (174 aa)). Cystine bridges form between Cys929/Cys934, Cys976/Cys1046, Cys977/Cys1005, and Cys988/Cys1002. Residues Asn993 and Asn1082 are each glycosylated (N-linked (GlcNAc...) asparagine). 5 helical membrane-spanning segments follow: residues 1126–1146 (IMPI…GIIC), 1157–1177 (ACAV…MYIF), 1179–1199 (IPVN…LIEF), 1226–1246 (IGPI…MFLS), and 1260–1280 (LFLI…PILL).

The protein belongs to the patched family.

It localises to the membrane. The catalysed reaction is cholesterol(in) = cholesterol(out). In terms of biological role, involved in the uptake or utilization of cholesterol. Ncr-1 and ncr-2 act redundantly to prevent dauer larva formation under favorable growth conditions, and are required for the normal functioning of ADF, ASI and ASG neurons. The protein is NPC intracellular cholesterol transporter 1 homolog 1 of Caenorhabditis elegans.